Consider the following 173-residue polypeptide: MKQSLTLVFLVAIGYATAHTTSHDYSGGYGGGCYGSDCDSGYGDSGYGGGCTGGDCGGGYGGGCSGGDCGNYGGGYGGDCNGGDCGNYGGGYGGGNGGGCSGGNCGGGFDEAFPAPYGGDYGNGGNGFGKGGSKGNNYGKGYGGGSGKGKGGGKGGKGGKGGTYKPSHYGGGY.

The signal sequence occupies residues 1–18; sequence MKQSLTLVFLVAIGYATA. Residues 145–162 are compositionally biased toward gly residues; it reads GSGKGKGGGKGGKGGKGG. Residues 145–173 are disordered; it reads GSGKGKGGGKGGKGGKGGTYKPSHYGGGY.

The sequence is that of Eggshell protein from Schistosoma mansoni (Blood fluke).